Reading from the N-terminus, the 156-residue chain is ATP synthase subunit b (156 aa).

Residues 13 to 33 (AFIIFVWFCMKFVWPPLMNAI) traverse the membrane as a helical segment.

The protein belongs to the ATPase B chain family. F-type ATPases have 2 components, F(1) - the catalytic core - and F(0) - the membrane proton channel. F(1) has five subunits: alpha(3), beta(3), gamma(1), delta(1), epsilon(1). F(0) has three main subunits: a(1), b(2) and c(10-14). The alpha and beta chains form an alternating ring which encloses part of the gamma chain. F(1) is attached to F(0) by a central stalk formed by the gamma and epsilon chains, while a peripheral stalk is formed by the delta and b chains.

It is found in the cell inner membrane. F(1)F(0) ATP synthase produces ATP from ADP in the presence of a proton or sodium gradient. F-type ATPases consist of two structural domains, F(1) containing the extramembraneous catalytic core and F(0) containing the membrane proton channel, linked together by a central stalk and a peripheral stalk. During catalysis, ATP synthesis in the catalytic domain of F(1) is coupled via a rotary mechanism of the central stalk subunits to proton translocation. Its function is as follows. Component of the F(0) channel, it forms part of the peripheral stalk, linking F(1) to F(0). The protein is ATP synthase subunit b of Shewanella woodyi (strain ATCC 51908 / MS32).